Consider the following 368-residue polypeptide: Phosphate acyltransferase (368 aa).

The tract at residues 337-368 is disordered; sequence LGDGEHDAGGAGQASPAAGHHAEPSAAQSSKA.

The protein belongs to the PlsX family. In terms of assembly, homodimer. Probably interacts with PlsY.

The protein localises to the cytoplasm. The catalysed reaction is a fatty acyl-[ACP] + phosphate = an acyl phosphate + holo-[ACP]. It participates in lipid metabolism; phospholipid metabolism. Its function is as follows. Catalyzes the reversible formation of acyl-phosphate (acyl-PO(4)) from acyl-[acyl-carrier-protein] (acyl-ACP). This enzyme utilizes acyl-ACP as fatty acyl donor, but not acyl-CoA. The polypeptide is Phosphate acyltransferase (Burkholderia orbicola (strain MC0-3)).